An 873-amino-acid polypeptide reads, in one-letter code: F-box only protein 41 (873 aa).

Residues 85–97 show a composition bias toward polar residues; it reads ESTSFQGKEQATG. Disordered regions lie at residues 85-110, 163-193, and 345-540; these read ESTSFQGKEQATGPSPAGPHLLHHHH, SSACSTPPPGPGPGPCSGPSSASPASPSPAD, and SSSC…PSRS. Over residues 168 to 178 the composition is skewed to pro residues; that stretch reads TPPPGPGPGPC. Positions 179-192 are enriched in low complexity; sequence SGPSSASPASPSPA. Residues 207–349 adopt a coiled-coil conformation; that stretch reads ALEKLEVDRR…QLQVISSSCG (143 aa). Gly residues predominate over residues 357-371; sequence GRGGGGSASGPGVRG. Residue arginine 358 is modified to Omega-N-methylarginine. Polar residues-rich tracts occupy residues 384–414 and 442–456; these read VPSTYAVSRHGSSPSTGASSRVPAASQSSGC and AQATNGGSERSQAPR. Position 476 is a phosphoserine (serine 476). Phosphothreonine is present on threonine 477. The F-box domain occupies 548-592; that stretch reads ILKMRAALFCIFTYLDTRTLLHAAEVCRDWRFVARHPAVWTRVLL. Serine 760 is subject to Phosphoserine.

In terms of assembly, directly interacts with SKP1 and CUL1.

Substrate-recognition component of the SCF (SKP1-CUL1-F-box protein)-type E3 ubiquitin ligase complex. This chain is F-box only protein 41 (Fbxo41), found in Mus musculus (Mouse).